The following is a 223-amino-acid chain: Golgi SNAP receptor complex member 1-1 (223 aa).

Residues 1 to 201 (MDVPSSWDAL…AAIKRKKSMD (201 aa)) lie on the Cytoplasmic side of the membrane. A coiled-coil region spans residues 8-67 (DALRKQARKIEAQLDEQMHSYRRLVSTKALSKSDGNESDLEAGIDLLLRQLQQVNAQMQA). A helical; Anchor for type IV membrane protein transmembrane segment spans residues 202 to 222 (TIILSLVAAVCTFLIFIYWIT). Lys-223 is a topological domain (vesicular).

The protein belongs to the GOSR1 family. Component of several multiprotein Golgi SNARE complexes.

Its subcellular location is the golgi apparatus membrane. In terms of biological role, involved in transport from the ER to the Golgi apparatus as well as in intra-Golgi transport. It belongs to a super-family of proteins called t-SNAREs or soluble NSF (N-ethylmaleimide-sensitive factor) attachment protein receptor. In Arabidopsis thaliana (Mouse-ear cress), this protein is Golgi SNAP receptor complex member 1-1 (GOS11).